We begin with the raw amino-acid sequence, 424 residues long: MAKQIQAIRGMNDILPNQSPVWQKLEAVLRDAVAAFGYSEIRTPIVESTDLFKRSIGEVTDIVEKEMYTFEDRNGDSLTLRPEGTASTVRAGNEHGLLYNQEQRLWYTGPMFRHERPQKGRYRQFHQFGVEVYGIASADIDAEVLMLSNMLWQKLGLTEHVVLEINTLGDSDERAAYRDALIAFLEVHKDKLDEDSQRRMYSNPLRVLDTKNPEIQAILADAPALMDYLGEESKSHFSTLRELLDAVGIQYRVNPRLVRGLDYYNRTVFEWVTDSLGAQGTVLAGGRYDGLVGQLGGKDTPAVGFAMGLERIVLLLETLELAKDVPAAVDVYVTAMGDSCVPAAFAIANELRVALPGVRIMTHCGGGNFKKQIKRADKSGAALALIIGDNELAEGKVAIKPLRNDNEQQLVAREALAETIKALI.

The protein belongs to the class-II aminoacyl-tRNA synthetase family. In terms of assembly, homodimer.

The protein resides in the cytoplasm. The catalysed reaction is tRNA(His) + L-histidine + ATP = L-histidyl-tRNA(His) + AMP + diphosphate + H(+). The polypeptide is Histidine--tRNA ligase (Shewanella amazonensis (strain ATCC BAA-1098 / SB2B)).